Reading from the N-terminus, the 441-residue chain is Vacuolar cation/proton exchanger 5 (441 aa).

G2 carries the N-myristoyl glycine lipid modification. Over 2 to 69 (GCCKVPALIQ…PNNSVLQSFK (68 aa)) the chain is Cytoplasmic. S-palmitoyl cysteine attachment occurs at residues C3 and C4. Residues 70–90 (IVILSNKLNLLLPFGPLAILL) traverse the membrane as a helical segment. Topologically, residues 91 to 97 (HYLTDNK) are extracellular. A helical membrane pass occupies residues 98–118 (GWIFLLSLVGITPLAERLGYA). The Cytoplasmic segment spans residues 119–129 (TEQLACYTGST). A helical membrane pass occupies residues 130–150 (VGGLLNATFGNVTELIISIFA). The tract at residues 139 to 174 (GNVTELIISIFALKSGMIRVVQLTLLGSILSNMLLV) is cation selection. At 151–165 (LKSGMIRVVQLTLLG) the chain is on the extracellular side. A helical transmembrane segment spans residues 166–186 (SILSNMLLVLGCAFFCGGLVF). At 187–197 (SQKEQVFDKGN) the chain is on the cytoplasmic side. Residues 198-218 (AVVNSGLLLMAVMGLLFPAVL) traverse the membrane as a helical segment. At 219-231 (HYTHSEVHAGSSE) the chain is on the extracellular side. The chain crosses the membrane as a helical span at residues 232–252 (LALSRFSSCIMLVAYAAYLFF). Over 253-286 (QLKSQPSSYTPLTEETNQNEETSDDDEDPEISKW) the chain is Cytoplasmic. A helical membrane pass occupies residues 287 to 307 (EAIIWLSILTAWVSLLSGYLV). Residues 308 to 311 (DAIE) lie on the Extracellular side of the membrane. Residues 312-332 (GASVSWKIPISFISVILLPIV) form a helical membrane-spanning segment. Topologically, residues 333–354 (GNAAEHAGAIMFAMKDKLDLSL) are cytoplasmic. A cation selection region spans residues 333–368 (GNAAEHAGAIMFAMKDKLDLSLGVAIGSSIQISMFA). Residues 355-375 (GVAIGSSIQISMFAVPFCVVI) traverse the membrane as a helical segment. Over 376 to 384 (GWMMGAQMD) the chain is Extracellular. The chain crosses the membrane as a helical span at residues 385 to 405 (LNFQLFETATLFITVIVVAFF). Over 406–412 (LQEGTSN) the chain is Cytoplasmic. The chain crosses the membrane as a helical span at residues 413 to 433 (YFKGLMLILCYLIVAASFFVH). Over 434–441 (EDPHQDDI) the chain is Extracellular.

The protein belongs to the Ca(2+):cation antiporter (CaCA) (TC 2.A.19) family. Cation/proton exchanger (CAX) subfamily.

It localises to the vacuole membrane. Its function is as follows. Vacuolar cation/proton exchanger (CAX). Translocates Ca(2+) and other metal ions into vacuoles using the proton gradient formed by H(+)-ATPase and H(+)-pyrophosphatase. The polypeptide is Vacuolar cation/proton exchanger 5 (CAX5) (Arabidopsis thaliana (Mouse-ear cress)).